A 428-amino-acid chain; its full sequence is 3-phosphoshikimate 1-carboxyvinyltransferase (428 aa).

Residues Lys-22, Ser-23, and Arg-27 each coordinate 3-phosphoshikimate. Residue Lys-22 participates in phosphoenolpyruvate binding. Gly-96 and Arg-124 together coordinate phosphoenolpyruvate. The 3-phosphoshikimate site is built by Ser-170, Ser-171, Gln-172, Ser-198, Asp-314, Asn-337, and Lys-341. Gln-172 contributes to the phosphoenolpyruvate binding site. The Proton acceptor role is filled by Asp-314. Phosphoenolpyruvate contacts are provided by Arg-345, Arg-387, and Lys-412.

It belongs to the EPSP synthase family. In terms of assembly, monomer.

Its subcellular location is the cytoplasm. It catalyses the reaction 3-phosphoshikimate + phosphoenolpyruvate = 5-O-(1-carboxyvinyl)-3-phosphoshikimate + phosphate. It functions in the pathway metabolic intermediate biosynthesis; chorismate biosynthesis; chorismate from D-erythrose 4-phosphate and phosphoenolpyruvate: step 6/7. Catalyzes the transfer of the enolpyruvyl moiety of phosphoenolpyruvate (PEP) to the 5-hydroxyl of shikimate-3-phosphate (S3P) to produce enolpyruvyl shikimate-3-phosphate and inorganic phosphate. In Shewanella denitrificans (strain OS217 / ATCC BAA-1090 / DSM 15013), this protein is 3-phosphoshikimate 1-carboxyvinyltransferase.